The following is a 205-amino-acid chain: MSAQRLISNRTSQQSASNSDYTWEYEYYEIGPVSFEGLKAHKYSIVIGFWVGLAVFVIFMFFVLTLLTKTGAPHQDNAESSEKRFRMNSFVSDFGRPLEPDKVFSRQGNEESRSLFHCYINEVERLDRAKACHQTTALDSDVQLQEAIRSSGQPEEELNRLMKFDIPNFVNTDQNYFGEDDLLISEPPIVLETKPLSQTSHKDLD.

N-linked (GlcNAc...) asparagine glycosylation occurs at Asn9. A helical transmembrane segment spans residues 45-65 (IVIGFWVGLAVFVIFMFFVLT). Phosphoserine is present on Ser89.

This sequence belongs to the MRAP family. As to quaternary structure, homodimer and heterodimer. Forms antiparallel homodimers and heterodimers with MRAP. Interacts with MC1R, MC2R, MC3R, MC4R and MC5R. As to expression, expressed in the adrenal gland and brain. Not expressed in other tissues.

The protein localises to the cell membrane. The protein resides in the endoplasmic reticulum membrane. In terms of biological role, modulator of melanocortin receptor 4 (MC4R), a receptor involved in energy homeostasis. Plays a central role in the control of energy homeostasis and body weight regulation by increasing ligand-sensitivity of MC4R and MC4R-mediated generation of cAMP. May also act as a negative regulator of MC2R: competes with MRAP for binding to MC2R and impairs the binding of corticotropin (ACTH) to MC2R. May also regulate activity of other melanocortin receptors (MC1R, MC3R and MC5R); however, additional evidence is required in vivo. The chain is Melanocortin-2 receptor accessory protein 2 (MRAP2) from Homo sapiens (Human).